The sequence spans 387 residues: Glutamyl-tRNA reductase 1 (387 aa).

Residues 45–48 (TCNR), Ser96, 101–103 (ETD), and Gln107 each bind substrate. Catalysis depends on Cys46, which acts as the Nucleophile. An NADP(+)-binding site is contributed by 175 to 180 (GAGSVG).

This sequence belongs to the glutamyl-tRNA reductase family. Homodimer.

It catalyses the reaction (S)-4-amino-5-oxopentanoate + tRNA(Glu) + NADP(+) = L-glutamyl-tRNA(Glu) + NADPH + H(+). It functions in the pathway porphyrin-containing compound metabolism; protoporphyrin-IX biosynthesis; 5-aminolevulinate from L-glutamyl-tRNA(Glu): step 1/2. Functionally, catalyzes the NADPH-dependent reduction of glutamyl-tRNA(Glu) to glutamate 1-semialdehyde (GSA). This Pyrobaculum arsenaticum (strain DSM 13514 / JCM 11321 / PZ6) protein is Glutamyl-tRNA reductase 1.